A 143-amino-acid polypeptide reads, in one-letter code: Mediator of RNA polymerase II transcription subunit 9 (143 aa).

Positions 84 to 141 (QDCNHKIFELQKRFESAREQIRQLPGIDYNKDEQLQRLELLRNQFKLKQQLIRKYKDT) form a coiled coil.

The protein belongs to the Mediator complex subunit 9 family. Component of the Mediator complex.

The protein resides in the nucleus. Functionally, component of the Mediator complex, a coactivator involved in the regulated transcription of nearly all RNA polymerase II-dependent genes. Mediator functions as a bridge to convey information from gene-specific regulatory proteins to the basal RNA polymerase II transcription machinery. Mediator is recruited to promoters by direct interactions with regulatory proteins and serves as a scaffold for the assembly of a functional preinitiation complex with RNA polymerase II and the general transcription factors. In Drosophila pseudoobscura pseudoobscura (Fruit fly), this protein is Mediator of RNA polymerase II transcription subunit 9 (MED9).